A 210-amino-acid polypeptide reads, in one-letter code: Na(+)-translocating NADH-quinone reductase subunit D (210 aa).

6 consecutive transmembrane segments (helical) span residues 14–34 (PIVN…ALAV), 42–62 (LVMA…ISMI), 72–92 (IIVQ…LLQA), 103–123 (VFVG…AYAM), 131–151 (FMDG…VGFV), and 178–198 (NGLL…IWII).

Belongs to the NqrDE/RnfAE family. Composed of six subunits; NqrA, NqrB, NqrC, NqrD, NqrE and NqrF.

Its subcellular location is the cell inner membrane. The enzyme catalyses a ubiquinone + n Na(+)(in) + NADH + H(+) = a ubiquinol + n Na(+)(out) + NAD(+). Its function is as follows. NQR complex catalyzes the reduction of ubiquinone-1 to ubiquinol by two successive reactions, coupled with the transport of Na(+) ions from the cytoplasm to the periplasm. NqrA to NqrE are probably involved in the second step, the conversion of ubisemiquinone to ubiquinol. In Shewanella oneidensis (strain ATCC 700550 / JCM 31522 / CIP 106686 / LMG 19005 / NCIMB 14063 / MR-1), this protein is Na(+)-translocating NADH-quinone reductase subunit D.